Reading from the N-terminus, the 1132-residue chain is Phospholipid-transporting ATPase IG (1132 aa).

Over 1–66 (MQMVPSLPPA…NFLPKNLFEQ (66 aa)) the chain is Cytoplasmic. Residues 67–85 (FRRIANFYFLIIFLVQVTV) form a helical membrane-spanning segment. Position 86 (Asp-86) is a topological domain, extracellular. Residues 87–107 (TPTSPVTSGLPLFFVITVTAI) traverse the membrane as a helical segment. The Cytoplasmic segment spans residues 108-290 (KQGYEDCLRH…SQKRSAVEKS (183 aa)). Residues 291 to 311 (INAFLIVYLFILLTKAAVCTT) form a helical membrane-spanning segment. The Extracellular segment spans residues 312–346 (LKYVWQSTPYNDEPWYNQKTQKERETLKVLKMFTD). Residues 347-367 (FLSFMVLFNFIIPVSMYVTVE) form a helical membrane-spanning segment. Topologically, residues 368-879 (MQKFLGSFFI…YVRIAHLVQY (512 aa)) are cytoplasmic. Asp-412 serves as the catalytic 4-aspartylphosphate intermediate. ATP is bound by residues Asp-412, Lys-413, and Thr-414. Asp-412 contributes to the Mg(2+) binding site. Mg(2+) is bound at residue Thr-414. Position 445 is a phosphoserine (Ser-445). Positions 501, 543, 566, 597, 677, 678, 679, 792, and 798 each coordinate ATP. Mg(2+) is bound at residue Asp-819. Residues Asn-822 and Asp-823 each coordinate ATP. Asp-823 provides a ligand contact to Mg(2+). A helical membrane pass occupies residues 880–900 (FFYKNLCFILPQFLYQFFCGF). The Extracellular segment spans residues 901 to 908 (SQQPLYDA). The chain crosses the membrane as a helical span at residues 909-929 (AYLTMYNICFTSLPILAYSLL). At 930 to 955 (EQHINIDTLTSDPRLYMKISGNAMLQ) the chain is on the cytoplasmic side. A helical transmembrane segment spans residues 956–976 (LGPFLYWTFLAAFEGTVFFFG). Residues 977-995 (TYFLFQTASLEENGKVYGN) are Extracellular-facing. A helical transmembrane segment spans residues 996–1016 (WTFGTIVFTVLVFTVTLKLAL). The Cytoplasmic segment spans residues 1017-1026 (DTRFWTWINH). The helical transmembrane segment at 1027–1047 (FVIWGSLAFYVFFSFFWGGII) threads the bilayer. At 1048–1069 (WPFLKQQRMYFVFAQMLSSVST) the chain is on the extracellular side. A helical transmembrane segment spans residues 1070–1090 (WLAIILLIFISLFPEILLIVL). Residues 1091-1132 (KNVRRRSARRNLSCRRASDSLSARPSVRPLLLRTFSDESNVL) lie on the Cytoplasmic side of the membrane. Phosphoserine is present on residues Ser-1108, Ser-1116, and Ser-1126. The Di-leucine motif signature appears at 1116-1121 (SVRPLL).

Belongs to the cation transport ATPase (P-type) (TC 3.A.3) family. Type IV subfamily. As to quaternary structure, component of a P4-ATPase flippase complex which consists of a catalytic alpha subunit ATP11C and an accessory beta subunit TMEM30A. Requires Mg(2+) as cofactor. In terms of processing, proteolytically cleaved by CASP3, CASP6 and CASP7. Post-translationally, phosphorylated at Ser-1116 likely by PRKCA; this creates a functional di-leucine motif that is sufficient for endocytosis. In terms of tissue distribution, widely expressed.

Its subcellular location is the cell membrane. It is found in the endoplasmic reticulum membrane. The protein localises to the early endosome membrane. The protein resides in the recycling endosome membrane. It catalyses the reaction ATP + H2O + phospholipidSide 1 = ADP + phosphate + phospholipidSide 2.. It carries out the reaction a 1,2-diacyl-sn-glycero-3-phospho-L-serine(out) + ATP + H2O = a 1,2-diacyl-sn-glycero-3-phospho-L-serine(in) + ADP + phosphate + H(+). The enzyme catalyses a 1,2-diacyl-sn-glycero-3-phosphoethanolamine(out) + ATP + H2O = a 1,2-diacyl-sn-glycero-3-phosphoethanolamine(in) + ADP + phosphate + H(+). With respect to regulation, the flippase activity is inactivated by caspase-mediated cleavage in apoptotic cells, allowing for PS exposure on the cell surface and engulfment of apoptotic cells by macrophages. The ATPase activity is up-regulated by aminophospholipids PS and PE and down-regulated by Increasing intracellular Ca2+ levels. In terms of biological role, catalytic component of a P4-ATPase flippase complex which catalyzes the hydrolysis of ATP coupled to the transport of aminophospholipids, phosphatidylserines (PS) and phosphatidylethanolamines (PE), from the outer to the inner leaflet of the plasma membrane. Major PS-flippase in immune cell subsets. In erythrocyte plasma membrane, it is required to maintain PS in the inner leaflet preventing its exposure on the surface. This asymmetric distribution is critical for the survival of erythrocytes in circulation since externalized PS is a phagocytic signal for erythrocyte clearance by splenic macrophages. Required for B cell differentiation past the pro-B cell stage. Seems to mediate PS flipping in pro-B cells. May be involved in the transport of cholestatic bile acids. In Homo sapiens (Human), this protein is Phospholipid-transporting ATPase IG.